We begin with the raw amino-acid sequence, 799 residues long: Homeobox protein engrailed (799 aa).

4 disordered regions span residues 189-331 (LPSR…DATK), 369-444 (GNFL…SLRQ), 554-664 (HPFL…DKAK), and 678-705 (SDRP…RTAF). Polar residues predominate over residues 210–222 (QSPSTSIRSNLVS). 2 stretches are compositionally biased toward basic and acidic residues: residues 228 to 239 (SRRDDQETSDSC) and 246 to 256 (RAINDSERYDV). Composition is skewed to polar residues over residues 284–299 (LNLT…QLFH) and 377–401 (HTFQ…SSPD). The segment covering 416–431 (ESLSSPSSSSSSSRSS) has biased composition (low complexity). 2 stretches are compositionally biased toward basic and acidic residues: residues 608–619 (DQKKRSRDESAS) and 629–648 (VHLK…EKGN). A DNA-binding region (homeobox) is located at residues 698–757 (EKRPRTAFTNDQLQRLKREFDECRYLTETRRKNLADELGLTESQIKIWFQNKRAKIKKSV).

Belongs to the engrailed homeobox family. In terms of tissue distribution, expressed in the dorsal ectoderm of early gastrulae in a band corresponding to the peripheral area of the presumptive shell gland. Also expressed at four points along the posterior ectoderm. In late gastrulae, it is predominantly expressed in the peripheral ectoderm of the shell gland and in spots at the posterior end behind the presumptive foot. Expressed in late trochophore larvae at four points behind the foot, at two locations at the base of the foot and in the peripheral ectoderm of the shell gland.

It is found in the nucleus. May be involved in shell and shell gland formation during development. This is Homeobox protein engrailed from Lymnaea stagnalis (Great pond snail).